Consider the following 71-residue polypeptide: Small ribosomal subunit protein bS21 (71 aa).

Belongs to the bacterial ribosomal protein bS21 family.

This Ruthia magnifica subsp. Calyptogena magnifica protein is Small ribosomal subunit protein bS21.